The following is a 160-amino-acid chain: Probable dihydroneopterin aldolase 3 (160 aa).

Residues E59, F91, and Y110–E111 each bind substrate. K137 serves as the catalytic Proton donor/acceptor.

It belongs to the DHNA family. As to quaternary structure, homooctamer. Forms a hollow cylinder assembled from two ring-shaped tetramers. In terms of tissue distribution, expressed at very low levels in siliques.

It carries out the reaction 7,8-dihydroneopterin = 6-hydroxymethyl-7,8-dihydropterin + glycolaldehyde. The protein operates within cofactor biosynthesis; tetrahydrofolate biosynthesis; 2-amino-4-hydroxy-6-hydroxymethyl-7,8-dihydropteridine diphosphate from 7,8-dihydroneopterin triphosphate: step 3/4. Its function is as follows. Catalyzes the conversion of 7,8-dihydroneopterin into 6-hydroxymethyl-7,8-dihydropterin, a biosynthetic precursor of the vitamin tetrahydrofolate. Can use L-threo-dihydroneopterin and D-erythro-dihydroneopterin as substrates for the formation of 6-hydroxymethyldihydropterin, but it can also catalyze the epimerization of carbon 2' of dihydroneopterin and dihydromonapterin. The protein is Probable dihydroneopterin aldolase 3 of Arabidopsis thaliana (Mouse-ear cress).